Reading from the N-terminus, the 344-residue chain is tRNA N6-adenosine threonylcarbamoyltransferase (344 aa).

Fe cation-binding residues include His-112 and His-116. Residues 134–138 (LASGG), Asp-167, Gly-180, and Asn-280 contribute to the substrate site. Residue Asp-308 participates in Fe cation binding.

The protein belongs to the KAE1 / TsaD family. The cofactor is Fe(2+).

The protein resides in the cytoplasm. The enzyme catalyses L-threonylcarbamoyladenylate + adenosine(37) in tRNA = N(6)-L-threonylcarbamoyladenosine(37) in tRNA + AMP + H(+). In terms of biological role, required for the formation of a threonylcarbamoyl group on adenosine at position 37 (t(6)A37) in tRNAs that read codons beginning with adenine. Is involved in the transfer of the threonylcarbamoyl moiety of threonylcarbamoyl-AMP (TC-AMP) to the N6 group of A37, together with TsaE and TsaB. TsaD likely plays a direct catalytic role in this reaction. The chain is tRNA N6-adenosine threonylcarbamoyltransferase from Rickettsia peacockii (strain Rustic).